Consider the following 1073-residue polypeptide: Carbamoyl phosphate synthase large chain (1073 aa).

The interval 2 to 403 (PKRTDIKSIL…SLQKALRGLE (402 aa)) is carboxyphosphate synthetic domain. The ATP site is built by Arg129, Arg169, Gly175, Gly176, Glu208, Leu210, Glu215, Gly241, Ile242, His243, Gln285, and Glu299. The ATP-grasp 1 domain occupies 133–328 (DVAMKKIGLE…IAKVAAKLAV (196 aa)). Gln285, Glu299, and Asn301 together coordinate Mg(2+). 3 residues coordinate Mn(2+): Gln285, Glu299, and Asn301. Positions 404–553 (VGATGFDPKV…YSTYEEECEA (150 aa)) are oligomerization domain. Residues 554–936 (NPSTDREKIM…AFAKAQLGSN (383 aa)) are carbamoyl phosphate synthetic domain. The region spanning 679–870 (QHAVERLKLK…LAKVAARVMA (192 aa)) is the ATP-grasp 2 domain. The ATP site is built by Arg715, His754, Leu756, Glu761, Gly786, Val787, His788, Ser789, Gln829, and Glu841. The Mg(2+) site is built by Gln829, Glu841, and Asn843. Gln829, Glu841, and Asn843 together coordinate Mn(2+). Positions 937-1073 (STMKKHGRAL…SVQEMHAQIK (137 aa)) constitute an MGS-like domain. The allosteric domain stretch occupies residues 937–1073 (STMKKHGRAL…SVQEMHAQIK (137 aa)).

It belongs to the CarB family. Composed of two chains; the small (or glutamine) chain promotes the hydrolysis of glutamine to ammonia, which is used by the large (or ammonia) chain to synthesize carbamoyl phosphate. Tetramer of heterodimers (alpha,beta)4. The cofactor is Mg(2+). Mn(2+) serves as cofactor.

The catalysed reaction is hydrogencarbonate + L-glutamine + 2 ATP + H2O = carbamoyl phosphate + L-glutamate + 2 ADP + phosphate + 2 H(+). The enzyme catalyses hydrogencarbonate + NH4(+) + 2 ATP = carbamoyl phosphate + 2 ADP + phosphate + 2 H(+). It participates in amino-acid biosynthesis; L-arginine biosynthesis; carbamoyl phosphate from bicarbonate: step 1/1. Its pathway is pyrimidine metabolism; UMP biosynthesis via de novo pathway; (S)-dihydroorotate from bicarbonate: step 1/3. Large subunit of the glutamine-dependent carbamoyl phosphate synthetase (CPSase). CPSase catalyzes the formation of carbamoyl phosphate from the ammonia moiety of glutamine, carbonate, and phosphate donated by ATP, constituting the first step of 2 biosynthetic pathways, one leading to arginine and/or urea and the other to pyrimidine nucleotides. The large subunit (synthetase) binds the substrates ammonia (free or transferred from glutamine from the small subunit), hydrogencarbonate and ATP and carries out an ATP-coupled ligase reaction, activating hydrogencarbonate by forming carboxy phosphate which reacts with ammonia to form carbamoyl phosphate. The chain is Carbamoyl phosphate synthase large chain from Escherichia coli O6:H1 (strain CFT073 / ATCC 700928 / UPEC).